A 571-amino-acid polypeptide reads, in one-letter code: Acetolactate synthase large subunit (571 aa).

Glutamate 51 provides a ligand contact to thiamine diphosphate. FAD is bound by residues arginine 153, 261–282 (HGTYEANMAMHYSDVIFAIGVR), and 304–323 (DIDPTSISKTVSADIPIVGD). The interval 394–474 (QHQMFTALYY…VLILNLNNSS (81 aa)) is thiamine pyrophosphate binding. Positions 445 and 472 each coordinate Mg(2+).

The protein belongs to the TPP enzyme family. Dimer of large and small chains. Requires Mg(2+) as cofactor. Thiamine diphosphate is required as a cofactor.

The enzyme catalyses 2 pyruvate + H(+) = (2S)-2-acetolactate + CO2. It participates in amino-acid biosynthesis; L-isoleucine biosynthesis; L-isoleucine from 2-oxobutanoate: step 1/4. Its pathway is amino-acid biosynthesis; L-valine biosynthesis; L-valine from pyruvate: step 1/4. This is Acetolactate synthase large subunit (ilvI) from Buchnera aphidicola subsp. Schizaphis graminum (strain Sg).